A 111-amino-acid polypeptide reads, in one-letter code: MIWLTLVFASLLSVAGQLCQKQATCFAAVNKRRKHIVLWLGLALACLGLAMVLWLLVLQNVPVGIAYPMLSLNFVWVTLAAVKLWHEPVSLRHWCGLAFIIGGIVILGSTV.

The Cytoplasmic segment spans residues 1-35; sequence MIWLTLVFASLLSVAGQLCQKQATCFAAVNKRRKH. A helical membrane pass occupies residues 36 to 56; that stretch reads IVLWLGLALACLGLAMVLWLL. Positions 40 to 109 constitute an EamA domain; it reads LGLALACLGL…IIGGIVILGS (70 aa). The Periplasmic portion of the chain corresponds to 57–60; it reads VLQN. Residues 61 to 81 traverse the membrane as a helical segment; it reads VPVGIAYPMLSLNFVWVTLAA. Residues 82–87 are Cytoplasmic-facing; sequence VKLWHE. A helical transmembrane segment spans residues 88 to 108; the sequence is PVSLRHWCGLAFIIGGIVILG. Residues 109–111 are Periplasmic-facing; that stretch reads STV.

It belongs to the ArnE family. Heterodimer of ArnE and ArnF.

Its subcellular location is the cell inner membrane. The protein operates within bacterial outer membrane biogenesis; lipopolysaccharide biosynthesis. Translocates 4-amino-4-deoxy-L-arabinose-phosphoundecaprenol (alpha-L-Ara4N-phosphoundecaprenol) from the cytoplasmic to the periplasmic side of the inner membrane. This is Probable 4-amino-4-deoxy-L-arabinose-phosphoundecaprenol flippase subunit ArnE from Escherichia coli O81 (strain ED1a).